A 297-amino-acid polypeptide reads, in one-letter code: MSHQMAPWIPMFIQSCKNNTEPFVSFQFATVDELTNKPRCRTVVFRDFLFHDKRTNVLTFNTDMRSSKITESFITPNSNNSSDSKRCETPFFEACFYFPETWEQYRFSGQCFTISKQFKKIPAEIVTKYDIFSPRFSETNDDSTDEEIDTPINDDDDDDKNNDADNNDINEDNKLIESIENDEHHEDEDDYYPQPQEWEAELLRQWSSLSRHTKSLYRKPAPGQKLTSETSKQLDKLHRGVDGAKEDAGLENFGIVCLCVDSVDFLNLKEGRGGERWIFQKTDGKDEDLWEEQEVCP.

The disordered stretch occupies residues 136–174; the sequence is FSETNDDSTDEEIDTPINDDDDDDKNNDADNNDINEDNK. Over residues 139–170 the composition is skewed to acidic residues; sequence TNDDSTDEEIDTPINDDDDDDKNNDADNNDIN.

This sequence to S.pombe SpBC725.03.

This is an uncharacterized protein from Saccharomyces cerevisiae (strain ATCC 204508 / S288c) (Baker's yeast).